We begin with the raw amino-acid sequence, 154 residues long: Lipoprotein signal peptidase (154 aa).

Transmembrane regions (helical) follow at residues glycine 55 to methionine 75 and leucine 84 to valine 104. Catalysis depends on residues aspartate 111 and aspartate 129. The helical transmembrane segment at isoleucine 124–phenylalanine 144 threads the bilayer.

It belongs to the peptidase A8 family.

It localises to the cell membrane. It carries out the reaction Release of signal peptides from bacterial membrane prolipoproteins. Hydrolyzes -Xaa-Yaa-Zaa-|-(S,diacylglyceryl)Cys-, in which Xaa is hydrophobic (preferably Leu), and Yaa (Ala or Ser) and Zaa (Gly or Ala) have small, neutral side chains.. It participates in protein modification; lipoprotein biosynthesis (signal peptide cleavage). Its function is as follows. This protein specifically catalyzes the removal of signal peptides from prolipoproteins. This Listeria welshimeri serovar 6b (strain ATCC 35897 / DSM 20650 / CCUG 15529 / CIP 8149 / NCTC 11857 / SLCC 5334 / V8) protein is Lipoprotein signal peptidase.